The sequence spans 151 residues: SsrA-binding protein (151 aa).

Belongs to the SmpB family.

The protein resides in the cytoplasm. Functionally, required for rescue of stalled ribosomes mediated by trans-translation. Binds to transfer-messenger RNA (tmRNA), required for stable association of tmRNA with ribosomes. tmRNA and SmpB together mimic tRNA shape, replacing the anticodon stem-loop with SmpB. tmRNA is encoded by the ssrA gene; the 2 termini fold to resemble tRNA(Ala) and it encodes a 'tag peptide', a short internal open reading frame. During trans-translation Ala-aminoacylated tmRNA acts like a tRNA, entering the A-site of stalled ribosomes, displacing the stalled mRNA. The ribosome then switches to translate the ORF on the tmRNA; the nascent peptide is terminated with the 'tag peptide' encoded by the tmRNA and targeted for degradation. The ribosome is freed to recommence translation, which seems to be the essential function of trans-translation. This chain is SsrA-binding protein, found in Campylobacter fetus subsp. fetus (strain 82-40).